Reading from the N-terminus, the 326-residue chain is (+)-T-muurolol synthase ((2E,6E)-farnesyl diphosphate cyclizing) (326 aa).

Residues Asp-81 and Asp-85 each contribute to the Mg(2+) site. The DDXXD motif signature appears at 81 to 85 (DDQCD). Substrate is bound at residue Arg-175. Asn-221 and Ser-225 together coordinate Mg(2+). Substrate is bound at residue Lys-228. Glu-229 is a binding site for Mg(2+). Residue 309-310 (RY) participates in substrate binding.

This sequence belongs to the terpene synthase family. The cofactor is Mg(2+).

It carries out the reaction (2E,6E)-farnesyl diphosphate + H2O = (+)-T-muurolol + diphosphate. Its pathway is secondary metabolite biosynthesis; terpenoid biosynthesis. Catalyzes the conversion of (2E,6E)-farnesyl diphosphate (FPP) into (+)-T-muurolol via a 1,10-cyclization, which requires isomerization of FPP to nerolidyl diphosphate (NPP) and then abstraction of the pyrophosphate from intermediate NPP leading to a (E,Z)-germacradienyl (helminthogermacradienyl) cation. The protein is (+)-T-muurolol synthase ((2E,6E)-farnesyl diphosphate cyclizing) of Roseiflexus castenholzii (strain DSM 13941 / HLO8).